Reading from the N-terminus, the 219-residue chain is UPF0502 protein Gmet_0262 (219 aa).

This sequence belongs to the UPF0502 family.

This is UPF0502 protein Gmet_0262 from Geobacter metallireducens (strain ATCC 53774 / DSM 7210 / GS-15).